The primary structure comprises 227 residues: MKHAEIPPPPDAAAEVFGPALGAARRYAEILAGAGVERGLLGPREVDRIWDRHILNCAVIGELVEAGERVADVGSGAGLPGIPLALARPDVHVVLIEPLLRRSDFLREAIEDVGIECSVVRGRAEDRSVREEVGPTDVVVSRAVASLDKLAKWSSPLLRPGGRMLAIKGERAAEEIEEHRRALAALGVSELKVERCGARFVDPPATVVVGFQATAPEKRPRSGRRQR.

S-adenosyl-L-methionine-binding positions include Gly-74, Leu-79, 124–125 (AE), and Arg-142.

The protein belongs to the methyltransferase superfamily. RNA methyltransferase RsmG family.

Its subcellular location is the cytoplasm. Its function is as follows. Specifically methylates the N7 position of guanine in position 518 of 16S rRNA. This is Ribosomal RNA small subunit methyltransferase G from Mycolicibacterium gilvum (strain PYR-GCK) (Mycobacterium gilvum (strain PYR-GCK)).